The primary structure comprises 262 residues: Small ribosomal subunit protein eS4y (262 aa).

The region spanning 42-104 (LPLVLIIRNR…TNENFRLLYD (63 aa)) is the S4 RNA-binding domain.

It belongs to the eukaryotic ribosomal protein eS4 family.

It localises to the cytoplasm. The chain is Small ribosomal subunit protein eS4y (RPS4B) from Arabidopsis thaliana (Mouse-ear cress).